Here is a 262-residue protein sequence, read N- to C-terminus: DNA-directed RNA polymerase subunit Rpo3 (262 aa).

Belongs to the archaeal Rpo3/eukaryotic RPB3 RNA polymerase subunit family. Part of the RNA polymerase complex.

The protein resides in the cytoplasm. The catalysed reaction is RNA(n) + a ribonucleoside 5'-triphosphate = RNA(n+1) + diphosphate. In terms of biological role, DNA-dependent RNA polymerase (RNAP) catalyzes the transcription of DNA into RNA using the four ribonucleoside triphosphates as substrates. The sequence is that of DNA-directed RNA polymerase subunit Rpo3 from Pyrobaculum islandicum (strain DSM 4184 / JCM 9189 / GEO3).